The following is a 263-amino-acid chain: tRNA (guanine-N(1)-)-methyltransferase (263 aa).

S-adenosyl-L-methionine is bound by residues glycine 124 and 144-149 (LGDFVL).

Belongs to the RNA methyltransferase TrmD family. As to quaternary structure, homodimer.

It is found in the cytoplasm. It catalyses the reaction guanosine(37) in tRNA + S-adenosyl-L-methionine = N(1)-methylguanosine(37) in tRNA + S-adenosyl-L-homocysteine + H(+). Functionally, specifically methylates guanosine-37 in various tRNAs. The polypeptide is tRNA (guanine-N(1)-)-methyltransferase (Aromatoleum aromaticum (strain DSM 19018 / LMG 30748 / EbN1) (Azoarcus sp. (strain EbN1))).